A 217-amino-acid chain; its full sequence is Resolvase homolog YneB (217 aa).

A Resolvase/invertase-type recombinase catalytic domain is found at 2–147 (KALIYARVST…RGMKRAVKNG (146 aa)). The active-site O-(5'-phospho-DNA)-serine intermediate is serine 10.

It belongs to the site-specific recombinase resolvase family.

The chain is Resolvase homolog YneB (yneB) from Bacillus subtilis (strain 168).